Reading from the N-terminus, the 284-residue chain is Putative mitochondrial carrier protein PET8 (284 aa).

3 Solcar repeats span residues 2–75 (NTFF…MKVK), 92–178 (IDTT…LKKT), and 192–271 (KGAI…VHSL). 6 helical membrane passes run 5 to 25 (FLSL…FFPI), 50 to 70 (GLGS…ISYD), 98 to 118 (MLSS…AEVV), 153 to 169 (GWST…CIQF), 194 to 214 (AICG…LDFL), and 252 to 272 (MWIS…HSLL).

Belongs to the mitochondrial carrier (TC 2.A.29) family.

Its subcellular location is the mitochondrion inner membrane. The sequence is that of Putative mitochondrial carrier protein PET8 (PET8) from Saccharomyces cerevisiae (strain ATCC 204508 / S288c) (Baker's yeast).